The sequence spans 122 residues: Large ribosomal subunit protein uL18 (122 aa).

The protein belongs to the universal ribosomal protein uL18 family. Part of the 50S ribosomal subunit; part of the 5S rRNA/L5/L18/L25 subcomplex. Contacts the 5S and 23S rRNAs.

Functionally, this is one of the proteins that bind and probably mediate the attachment of the 5S RNA into the large ribosomal subunit, where it forms part of the central protuberance. This Synechococcus sp. (strain JA-3-3Ab) (Cyanobacteria bacterium Yellowstone A-Prime) protein is Large ribosomal subunit protein uL18.